The chain runs to 203 residues: NAD(P)H dehydrogenase (quinone) (203 aa).

A Flavodoxin-like domain is found at 7-194 (VLVLYHSSYG…SLARKQGAHV (188 aa)). FMN is bound by residues 13–18 (SSYGHI) and 82–84 (TRF). Position 15 (tyrosine 15) interacts with NAD(+). Residue tryptophan 102 coordinates substrate. FMN is bound by residues 117 to 122 (STGTGG) and histidine 137.

Belongs to the WrbA family. FMN is required as a cofactor.

The enzyme catalyses a quinone + NADH + H(+) = a quinol + NAD(+). It carries out the reaction a quinone + NADPH + H(+) = a quinol + NADP(+). The polypeptide is NAD(P)H dehydrogenase (quinone) (Parvibaculum lavamentivorans (strain DS-1 / DSM 13023 / NCIMB 13966)).